Reading from the N-terminus, the 142-residue chain is Multiprotein-bridging factor 1b (142 aa).

Residues 49–75 (NAGSNKAASSGTSLNTKKLDDDTENLS) form a disordered region. Polar residues predominate over residues 50–64 (AGSNKAASSGTSLNT). Residues 65–75 (KKLDDDTENLS) show a composition bias toward basic and acidic residues. An HTH cro/C1-type domain is found at 87 to 141 (IMQARGEKKLTQSQLAHLINEKPQVIQEYESGKAIPNQQILSKLERALGAKLRGK). The H-T-H motif DNA-binding region spans 98 to 117 (QSQLAHLINEKPQVIQEYES).

Belongs to the MBF1 family. Expressed in leaves, roots, stems, petioles and shoots. Higher expression in flowers and siliques. Detected in leaf veins through development.

The protein resides in the nucleus. Its subcellular location is the nucleolus. Transcriptional coactivator that stimulates transcriptional activity by bridging regulatory proteins and TBP, thereby recruiting TBP to promoters occupied by DNA-binding regulators. The polypeptide is Multiprotein-bridging factor 1b (MBF1B) (Arabidopsis thaliana (Mouse-ear cress)).